A 161-amino-acid chain; its full sequence is 18.1 kDa class I heat shock protein (161 aa).

One can recognise a sHSP domain in the interval 45-160 (DVAAFTNARV…QVKSIDISGA (116 aa)).

The protein belongs to the small heat shock protein (HSP20) family. May form oligomeric structures. Binds to AKR2A.

It is found in the cytoplasm. This is 18.1 kDa class I heat shock protein (HSP18.1) from Arabidopsis thaliana (Mouse-ear cress).